The sequence spans 462 residues: Histidine--tRNA ligase (462 aa).

Belongs to the class-II aminoacyl-tRNA synthetase family. As to quaternary structure, homodimer.

It localises to the cytoplasm. It catalyses the reaction tRNA(His) + L-histidine + ATP = L-histidyl-tRNA(His) + AMP + diphosphate + H(+). This is Histidine--tRNA ligase from Trichormus variabilis (strain ATCC 29413 / PCC 7937) (Anabaena variabilis).